The sequence spans 149 residues: L-alanine exporter AlaE (149 aa).

The next 4 helical transmembrane spans lie at 16-36 (FAMV…LSGM), 46-66 (LVAI…RDLI), 83-105 (ADVL…TVGA), and 115-135 (SSNI…LDYC).

Belongs to the AlaE exporter family.

It localises to the cell inner membrane. Its function is as follows. Exports L-alanine. In Salmonella typhimurium (strain LT2 / SGSC1412 / ATCC 700720), this protein is L-alanine exporter AlaE.